The following is a 92-amino-acid chain: Bombyxin A-6 (92 aa).

The N-terminal stretch at 1–19 is a signal peptide; sequence MKILLAIALMLSTVMWVST. Position 20 is a pyrrolidone carboxylic acid (Q20). Disulfide bonds link C29-C79, C41-C92, and C78-C83. A propeptide spans 50–70 (c peptide like); the sequence is SGAQFASYGSAWLMPYSEGRG.

It belongs to the insulin family. Heterodimer of a B chain and an A chain linked by two disulfide bonds.

The protein resides in the secreted. Brain peptide responsible for activation of prothoracic glands to produce ecdysone in insects. This is Bombyxin A-6 (BBXA6) from Bombyx mori (Silk moth).